The sequence spans 248 residues: Endonuclease V (248 aa).

Aspartate 54 and aspartate 118 together coordinate Mg(2+).

The protein belongs to the endonuclease V family. Mg(2+) serves as cofactor.

The protein localises to the cytoplasm. The enzyme catalyses Endonucleolytic cleavage at apurinic or apyrimidinic sites to products with a 5'-phosphate.. In terms of biological role, DNA repair enzyme involved in the repair of deaminated bases. Selectively cleaves double-stranded DNA at the second phosphodiester bond 3' to a deoxyinosine leaving behind the intact lesion on the nicked DNA. The polypeptide is Endonuclease V (Natronomonas pharaonis (strain ATCC 35678 / DSM 2160 / CIP 103997 / JCM 8858 / NBRC 14720 / NCIMB 2260 / Gabara) (Halobacterium pharaonis)).